The sequence spans 273 residues: MPELPEVETSRLGITPHLQGQTIKAIVVRTDKLRWPIPQELQKLVGQRVQSIRRRAKYLMIDTPEGSAIIHLGMSGSLRVLDEEVPSAKHDHVDLVLENGKVLRYNDPRKFGAWLYSEVGVAHQVLSKLGPEPLTNEFNSEYFAEKAKNKKTVVKQFIMNNAVVVGVGNIYASESLFMAQIHPKTPVGSLKASQITVLVAEIKKVLETAIKQGGTTLKDFNQVDGKPGYFAQELKVYGRAGKECPVCSSKIEEEKIGQRNSFWCGKCQFLAED.

The Schiff-base intermediate with DNA role is filled by P2. E3 functions as the Proton donor in the catalytic mechanism. K57 serves as the catalytic Proton donor; for beta-elimination activity. 3 residues coordinate DNA: H90, R109, and K150. The segment at 235 to 269 (KVYGRAGKECPVCSSKIEEEKIGQRNSFWCGKCQF) adopts an FPG-type zinc-finger fold. R259 (proton donor; for delta-elimination activity) is an active-site residue.

This sequence belongs to the FPG family. In terms of assembly, monomer. It depends on Zn(2+) as a cofactor.

The catalysed reaction is Hydrolysis of DNA containing ring-opened 7-methylguanine residues, releasing 2,6-diamino-4-hydroxy-5-(N-methyl)formamidopyrimidine.. It catalyses the reaction 2'-deoxyribonucleotide-(2'-deoxyribose 5'-phosphate)-2'-deoxyribonucleotide-DNA = a 3'-end 2'-deoxyribonucleotide-(2,3-dehydro-2,3-deoxyribose 5'-phosphate)-DNA + a 5'-end 5'-phospho-2'-deoxyribonucleoside-DNA + H(+). Involved in base excision repair of DNA damaged by oxidation or by mutagenic agents. Acts as a DNA glycosylase that recognizes and removes damaged bases. Has a preference for oxidized purines, such as 7,8-dihydro-8-oxoguanine (8-oxoG). Has AP (apurinic/apyrimidinic) lyase activity and introduces nicks in the DNA strand. Cleaves the DNA backbone by beta-delta elimination to generate a single-strand break at the site of the removed base with both 3'- and 5'-phosphates. In Aliivibrio fischeri (strain MJ11) (Vibrio fischeri), this protein is Formamidopyrimidine-DNA glycosylase.